The sequence spans 105 residues: Protein METHYLENE BLUE SENSITIVITY 1 (105 aa).

The tract at residues 26 to 46 (RGGGKAGIADRTGKEKGGHAK) is disordered. Over residues 36–46 (RTGKEKGGHAK) the composition is skewed to basic and acidic residues.

In terms of tissue distribution, mainly expressed in the epidermis.

The protein localises to the nucleus. It localises to the cytoplasm. It is found in the stress granule. Required for acclimation to reactive oxygen species (ROS) responses downstream of beta-cyclocitral (beta-cc) or mediated by dihydroactinidiolide, including singlet oxygen 1O(2) detoxification reactions, especially upon light-mediated photooxidative stress, and leading to programmed cell death. Prevents leaf senescence. Involved in cold acclimation. This Arabidopsis thaliana (Mouse-ear cress) protein is Protein METHYLENE BLUE SENSITIVITY 1.